Consider the following 322-residue polypeptide: Putative ankyrin repeat protein L897 (322 aa).

3 ANK repeats span residues 88–117 (DNEYYTYFALSIGAMDVFKWLISHGFSYDM), 181–210 (NIIDVIEYAVQINNCDIIKILVKKFIFWAN), and 248–277 (NKNEALKYAIMMKNYDMIELLINYNIQTDH).

In Acanthamoeba polyphaga (Amoeba), this protein is Putative ankyrin repeat protein L897.